Reading from the N-terminus, the 202-residue chain is LexA repressor (202 aa).

Residues 28 to 48 (RAEIAQRLGFRSPNAAEEHLK) constitute a DNA-binding region (H-T-H motif). Residues S119 and K156 each act as for autocatalytic cleavage activity in the active site.

The protein belongs to the peptidase S24 family. Homodimer.

The enzyme catalyses Hydrolysis of Ala-|-Gly bond in repressor LexA.. In terms of biological role, represses a number of genes involved in the response to DNA damage (SOS response), including recA and lexA. Binds to the 16 bp palindromic sequence 5'-CTGTATATATATACAG-3'. In the presence of single-stranded DNA, RecA interacts with LexA causing an autocatalytic cleavage which disrupts the DNA-binding part of LexA, leading to derepression of the SOS regulon and eventually DNA repair. The protein is LexA repressor of Edwardsiella ictaluri (strain 93-146).